Here is a 532-residue protein sequence, read N- to C-terminus: Invertase 2 (532 aa).

The signal sequence occupies residues 1–19; that stretch reads MLLQAFLFLLAGFAAKISA. Residue asparagine 23 is glycosylated (N-linked (GlcNAc...) asparagine). Substrate-binding positions include 39-42 and glutamine 60; that span reads WMND. Residue aspartate 42 is part of the active site. N-linked (GlcNAc...) asparagine; partial glycosylation occurs at asparagine 64. N-linked (GlcNAc...) asparagine glycosylation is present at asparagine 97. 102–103 is a substrate binding site; sequence FS. N-linked (GlcNAc...) asparagine glycosylation is found at asparagine 111 and asparagine 118. Asparagine 165 carries N-linked (GlcNAc...) asparagine; partial glycosylation. Residues 170-171 and glutamate 223 each bind substrate; that span reads RD. N-linked (GlcNAc...) asparagine; partial glycosylation is found at asparagine 266 and asparagine 275. A substrate-binding site is contributed by tryptophan 311. 4 N-linked (GlcNAc...) asparagine glycosylation sites follow: asparagine 356, asparagine 369, asparagine 384, and asparagine 398. Asparagine 512 carries an N-linked (GlcNAc...) asparagine; partial glycan.

Belongs to the glycosyl hydrolase 32 family. In terms of processing, isoform Secreted is glycosylated. Isoform Intracellular is not glycosylated.

It is found in the cytoplasm. It localises to the secreted. It carries out the reaction Hydrolysis of terminal non-reducing beta-D-fructofuranoside residues in beta-D-fructofuranosides.. The sequence is that of Invertase 2 (SUC2) from Saccharomyces cerevisiae (strain ATCC 204508 / S288c) (Baker's yeast).